Here is a 182-residue protein sequence, read N- to C-terminus: Nudix hydrolase 17, mitochondrial (182 aa).

Residues Met-1–Gln-26 constitute a mitochondrion transit peptide. Positions Val-27 to Val-158 constitute a Nudix hydrolase domain. The Nudix box motif lies at Gly-65–Gly-86. Residues Glu-80 and Glu-84 each contribute to the Mg(2+) site.

It belongs to the Nudix hydrolase family. Mg(2+) serves as cofactor. The cofactor is Mn(2+). Expressed in roots, leaves, stems and inflorescences.

The protein resides in the mitochondrion. Probably mediates the hydrolysis of some nucleoside diphosphate derivatives. The sequence is that of Nudix hydrolase 17, mitochondrial (NUDT17) from Arabidopsis thaliana (Mouse-ear cress).